Here is a 303-residue protein sequence, read N- to C-terminus: Acetaldehyde dehydrogenase 2 (303 aa).

Catalysis depends on cysteine 130, which acts as the Acyl-thioester intermediate. NAD(+) is bound by residues 161-169 and asparagine 272; that span reads SVGPGTRKN.

This sequence belongs to the acetaldehyde dehydrogenase family.

The catalysed reaction is acetaldehyde + NAD(+) + CoA = acetyl-CoA + NADH + H(+). The polypeptide is Acetaldehyde dehydrogenase 2 (Burkholderia vietnamiensis (strain G4 / LMG 22486) (Burkholderia cepacia (strain R1808))).